The sequence spans 325 residues: Biotin synthase (325 aa).

The Radical SAM core domain maps to 49–279 (VGDKVELCSI…DKNIRYAGGR (231 aa)). The [4Fe-4S] cluster site is built by C66, C70, and C73. The [2Fe-2S] cluster site is built by C144, C204, and R274.

The protein belongs to the radical SAM superfamily. Biotin synthase family. In terms of assembly, homodimer. Requires [4Fe-4S] cluster as cofactor. The cofactor is [2Fe-2S] cluster.

It carries out the reaction (4R,5S)-dethiobiotin + (sulfur carrier)-SH + 2 reduced [2Fe-2S]-[ferredoxin] + 2 S-adenosyl-L-methionine = (sulfur carrier)-H + biotin + 2 5'-deoxyadenosine + 2 L-methionine + 2 oxidized [2Fe-2S]-[ferredoxin]. Its pathway is cofactor biosynthesis; biotin biosynthesis; biotin from 7,8-diaminononanoate: step 2/2. In terms of biological role, catalyzes the conversion of dethiobiotin (DTB) to biotin by the insertion of a sulfur atom into dethiobiotin via a radical-based mechanism. This Carboxydothermus hydrogenoformans (strain ATCC BAA-161 / DSM 6008 / Z-2901) protein is Biotin synthase.